The sequence spans 295 residues: Protoheme IX farnesyltransferase 2 (295 aa).

A run of 9 helical transmembrane segments spans residues 9–29 (ITKP…FFLA), 36–56 (LAIF…GCVF), 85–105 (VALV…YYVA), 108–128 (LAAL…SLYL), 135–155 (GTLV…VAVS), 163–183 (LTLL…IAIF), 209–229 (ILLY…SGYA), 230–250 (GMSY…MAWT), and 263–283 (KLFV…SVDF).

It belongs to the UbiA prenyltransferase family. Protoheme IX farnesyltransferase subfamily.

Its subcellular location is the cell inner membrane. It catalyses the reaction heme b + (2E,6E)-farnesyl diphosphate + H2O = Fe(II)-heme o + diphosphate. The protein operates within porphyrin-containing compound metabolism; heme O biosynthesis; heme O from protoheme: step 1/1. Functionally, converts heme B (protoheme IX) to heme O by substitution of the vinyl group on carbon 2 of heme B porphyrin ring with a hydroxyethyl farnesyl side group. The polypeptide is Protoheme IX farnesyltransferase 2 (Pseudomonas fluorescens (strain ATCC BAA-477 / NRRL B-23932 / Pf-5)).